The chain runs to 170 residues: MLIYSDIITGDEIISDSYDLKEVDGIAYEVDCAMIEEGAVQVDIGANASAEEADEALDDGVVKVNNVVHSFRLQSTQFDKKGYLVYLKGYMKSVKNALKEQGKSDEEIKDFETKASAFAKNVILAKFKDWEFYTGESMNPDGMVVLLNYREDGTTPYVVVWKHGLKETKV.

In terms of domain architecture, TCTP spans 1 to 170; the sequence is MLIYSDIITG…WKHGLKETKV (170 aa).

The protein belongs to the TCTP family.

Its subcellular location is the cytoplasm. The protein localises to the cytoskeleton. Functionally, involved in protein synthesis. Involved in microtubule stabilization. The sequence is that of Translationally-controlled tumor protein homolog from Neurospora crassa (strain ATCC 24698 / 74-OR23-1A / CBS 708.71 / DSM 1257 / FGSC 987).